Reading from the N-terminus, the 388-residue chain is Putative F-box/kelch-repeat protein At2g29820 (388 aa).

Positions 6–33 (EILDGPNGDDPNNNPQEGEDNQNENPQE) are disordered. Low complexity predominate over residues 9–21 (DGPNGDDPNNNPQ). Residues 22 to 33 (EGEDNQNENPQE) are compositionally biased toward acidic residues. An F-box domain is found at 38–84 (LRNLLELPEELIERLIAHIPRCYYPYISLVSRDFRQVITSDKLFRTR). 2 Kelch repeats span residues 140–187 (KMYV…EIGG) and 189–233 (IYVI…FSTY).

This is Putative F-box/kelch-repeat protein At2g29820 from Arabidopsis thaliana (Mouse-ear cress).